Reading from the N-terminus, the 218-residue chain is Calcineurin B-like protein 5 (218 aa).

EF-hand domains are found at residues 35-69 (EVEA…FRNK), 70-105 (KTNL…FHPD), 107-142 (PEEQ…LLDE), and 151-186 (AVEM…NPYV).

The protein belongs to the calcineurin regulatory subunit family. As to quaternary structure, homodimer. Expressed at low levels in roots, shoots, culms, leaves and young spikelets.

Acts as a calcium sensor. CBL proteins interact with CIPK serine-threonine protein kinases. Binding of a CBL protein to the regulatory NAF domain of a CIPK protein lead to the activation of the kinase in a calcium-dependent manner. This Oryza sativa subsp. japonica (Rice) protein is Calcineurin B-like protein 5 (CBL5).